Reading from the N-terminus, the 468-residue chain is Ribosomal protein uS12 methylthiotransferase RimO (468 aa).

Residues 18–129 (PTVAFAHLGC…IVEVLERVEA (112 aa)) enclose the MTTase N-terminal domain. 6 residues coordinate [4Fe-4S] cluster: cysteine 27, cysteine 63, cysteine 92, cysteine 167, cysteine 171, and cysteine 174. A Radical SAM core domain is found at 153–382 (TTGEAVAYLK…MTLQQPISAA (230 aa)). The 72-residue stretch at 385 to 456 (ARWVGRTVDA…IYDLRAEIVG (72 aa)) folds into the TRAM domain.

It belongs to the methylthiotransferase family. RimO subfamily. [4Fe-4S] cluster serves as cofactor.

The protein resides in the cytoplasm. It carries out the reaction L-aspartate(89)-[ribosomal protein uS12]-hydrogen + (sulfur carrier)-SH + AH2 + 2 S-adenosyl-L-methionine = 3-methylsulfanyl-L-aspartate(89)-[ribosomal protein uS12]-hydrogen + (sulfur carrier)-H + 5'-deoxyadenosine + L-methionine + A + S-adenosyl-L-homocysteine + 2 H(+). Catalyzes the methylthiolation of an aspartic acid residue of ribosomal protein uS12. The sequence is that of Ribosomal protein uS12 methylthiotransferase RimO from Synechococcus sp. (strain WH7803).